A 292-amino-acid polypeptide reads, in one-letter code: 4-hydroxy-tetrahydrodipicolinate synthase (292 aa).

T45 is a pyruvate binding site. The active-site Proton donor/acceptor is Y133. K161 acts as the Schiff-base intermediate with substrate in catalysis. I203 serves as a coordination point for pyruvate.

It belongs to the DapA family. As to quaternary structure, homotetramer; dimer of dimers.

The protein localises to the cytoplasm. It catalyses the reaction L-aspartate 4-semialdehyde + pyruvate = (2S,4S)-4-hydroxy-2,3,4,5-tetrahydrodipicolinate + H2O + H(+). It participates in amino-acid biosynthesis; L-lysine biosynthesis via DAP pathway; (S)-tetrahydrodipicolinate from L-aspartate: step 3/4. Its function is as follows. Catalyzes the condensation of (S)-aspartate-beta-semialdehyde [(S)-ASA] and pyruvate to 4-hydroxy-tetrahydrodipicolinate (HTPA). The sequence is that of 4-hydroxy-tetrahydrodipicolinate synthase from Nitrosomonas eutropha (strain DSM 101675 / C91 / Nm57).